The chain runs to 254 residues: 3-oxo-5-alpha-steroid 4-dehydrogenase 2 (254 aa).

The next 4 helical transmembrane spans lie at 8 to 28 (SPVLAGSATLAALGALALYFA), 72 to 92 (PRSLFGPPATVLLGLFCAHYF), 146 to 166 (FSLGVFLFILGMGINIHSDYI), and 206 to 226 (LATWSLPALAFAFFSLCFLGL).

This sequence belongs to the steroid 5-alpha reductase family.

Its subcellular location is the microsome membrane. The protein resides in the endoplasmic reticulum membrane. It carries out the reaction a 3-oxo-5alpha-steroid + NADP(+) = a 3-oxo-Delta(4)-steroid + NADPH + H(+). The catalysed reaction is 17beta-hydroxy-5alpha-androstan-3-one + NADP(+) = testosterone + NADPH + H(+). It catalyses the reaction 5alpha-pregnane-3,20-dione + NADP(+) = progesterone + NADPH + H(+). In terms of biological role, converts testosterone (T) into 5-alpha-dihydrotestosterone (DHT) and progesterone or corticosterone into their corresponding 5-alpha-3-oxosteroids. It plays a central role in sexual differentiation and androgen physiology. In Sus scrofa (Pig), this protein is 3-oxo-5-alpha-steroid 4-dehydrogenase 2 (SRD5A2).